The chain runs to 38 residues: Turripeptide GpIAa (38 aa).

The protein belongs to the turripeptide family. As to expression, expressed by the venom duct.

The protein localises to the secreted. This chain is Turripeptide GpIAa, found in Cryptogemma periscelida (Atlantic gem-turris).